We begin with the raw amino-acid sequence, 257 residues long: Protein orai-2 (257 aa).

Helical transmembrane passes span 62–79 (ASSRTSALLSGFAMVAMV), 94–114 (LIAFSACTTVLVAVHLFALLI), 156–176 (LGILLFLAEVVLLCWIKFLPI), and 201–221 (LVSTIIMVPVGIIFVIFTIHF).

Belongs to the Orai family.

It is found in the membrane. Functionally, ca(2+) release-activated Ca(2+)-like (CRAC-like) channel subunit which mediates Ca(2+) influx and increase in Ca(2+)-selective current by synergy with the Ca(2+) sensor, stim1. In Xenopus laevis (African clawed frog), this protein is Protein orai-2 (orai2).